Consider the following 223-residue polypeptide: Phosphoribosylformylglycinamidine synthase subunit PurQ (223 aa).

The region spanning 3–223 is the Glutamine amidotransferase type-1 domain; sequence SAVILLPGLN…LFAGALGITA (221 aa). Cys-87 functions as the Nucleophile in the catalytic mechanism. Active-site residues include His-197 and Glu-199.

As to quaternary structure, part of the FGAM synthase complex composed of 1 PurL, 1 PurQ and 2 PurS subunits.

It localises to the cytoplasm. It catalyses the reaction N(2)-formyl-N(1)-(5-phospho-beta-D-ribosyl)glycinamide + L-glutamine + ATP + H2O = 2-formamido-N(1)-(5-O-phospho-beta-D-ribosyl)acetamidine + L-glutamate + ADP + phosphate + H(+). The enzyme catalyses L-glutamine + H2O = L-glutamate + NH4(+). Its pathway is purine metabolism; IMP biosynthesis via de novo pathway; 5-amino-1-(5-phospho-D-ribosyl)imidazole from N(2)-formyl-N(1)-(5-phospho-D-ribosyl)glycinamide: step 1/2. Part of the phosphoribosylformylglycinamidine synthase complex involved in the purines biosynthetic pathway. Catalyzes the ATP-dependent conversion of formylglycinamide ribonucleotide (FGAR) and glutamine to yield formylglycinamidine ribonucleotide (FGAM) and glutamate. The FGAM synthase complex is composed of three subunits. PurQ produces an ammonia molecule by converting glutamine to glutamate. PurL transfers the ammonia molecule to FGAR to form FGAM in an ATP-dependent manner. PurS interacts with PurQ and PurL and is thought to assist in the transfer of the ammonia molecule from PurQ to PurL. The protein is Phosphoribosylformylglycinamidine synthase subunit PurQ of Brucella suis biovar 1 (strain 1330).